A 137-amino-acid chain; its full sequence is Glutamyl-tRNA(Gln) amidotransferase subunit C, chloroplastic/mitochondrial (137 aa).

It belongs to the GatC family. In terms of assembly, subunit of the heterotrimeric GatCAB amidotransferase (AdT) complex, composed of A, B and C subunits.

The protein resides in the mitochondrion. The protein localises to the plastid. Its subcellular location is the chloroplast. It catalyses the reaction L-glutamyl-tRNA(Gln) + L-glutamine + ATP + H2O = L-glutaminyl-tRNA(Gln) + L-glutamate + ADP + phosphate + H(+). Functionally, allows the formation of correctly charged Gln-tRNA(Gln) through the transamidation of misacylated Glu-tRNA(Gln) in chloroplasts and mitochondria. The reaction takes place in the presence of glutamine and ATP through an activated gamma-phospho-Glu-tRNA(Gln). This is Glutamyl-tRNA(Gln) amidotransferase subunit C, chloroplastic/mitochondrial from Vitis vinifera (Grape).